A 558-amino-acid chain; its full sequence is Two-component response regulator-like APRR5 (558 aa).

The Response regulatory domain maps to 51–169 (RVLLVEADDS…ELRNLWQHVW (119 aa)). The interval 180 to 233 (FPWNESVGQQKAEGASANNSNGKRDDHVVSGNGGDAQSSCTRPEMEGESADVEV) is disordered. The stretch at 240 to 260 (QMECAKSQFNETRLLANELQS) forms a coiled coil. Disordered stretches follow at residues 297 to 319 (SLRRPNASENQSSGDRPSLHPSS) and 535 to 558 (KKLAEQRPRIKGQFVRQVQSTQAP). A compositionally biased stretch (polar residues) spans 303–319 (ASENQSSGDRPSLHPSS). A CCT domain is found at 509-551 (REAALTKFRMKRKDRCYEKKVRYESRKKLAEQRPRIKGQFVRQ).

This sequence belongs to the ARR-like family. In terms of assembly, interacts with ADO1 and ADO2. Interacts with SPY (via N-terminus). Post-translationally, phosphorylation varies throughout the diurnal cycle and enhances ADO1 binding. O-fucosylated by SPY. O-fucosylation promotes APRR5 proteolysis.

It localises to the nucleus. Transcriptional repressor of CCA1 and LHY, thereby controlling photoperiodic flowering response. Involved in the positive and negative feedback loops of the circadian clock. With RVE8, forms a negative feedback loop of the circadian clock. Expression of several members of the ARR-like family is controlled by circadian rhythm. Proteolytic substrate of the E3 ubiquitin ligase SCF(ADO1) complex. APRR9, APRR7, and APRR5 coordinately act on the upstream region of the target genes to repress their expression from noon until midnight. The particular coordinated sequential expression of APRR9, APRR7, APRR5, APRR3 and APPR1 result to circadian waves that may be at the basis of the endogenous circadian clock. Negative regulator of shade avoidance response. Involved in the inhibition of leaf expansion in shade avoidance response. The sequence is that of Two-component response regulator-like APRR5 (APRR5) from Arabidopsis thaliana (Mouse-ear cress).